The following is a 541-amino-acid chain: Copper transport protein CutJ (541 aa).

An N-terminal signal peptide occupies residues 1–25 (MKRNRWWIILLLFLVFLPKTSFAHA). His-24 and His-110 together coordinate Cu cation. Helical transmembrane passes span 146–166 (AILY…LFWY), 180–200 (ILTG…PIQT), 228–248 (SIWI…IPAI), 262–282 (PLIF…AAVV), 293–313 (FLHL…VLLL), 335–355 (WALT…FFII), 370–390 (LLVK…HFLL), and 407–427 (WAIG…PSPP).

It in the N-terminal section; belongs to the CopC family. This sequence in the C-terminal section; belongs to the CopD family.

It is found in the cell membrane. In terms of biological role, involved in uptake of extracellular oxidized copper under copper-limiting conditions. This chain is Copper transport protein CutJ, found in Bacillus subtilis (strain 168).